A 250-amino-acid chain; its full sequence is Aquaporin TIP1-1 (250 aa).

2 helical membrane-spanning segments follow: residues 24-44 (FAEF…GMAF) and 56-76 (AGLI…VSVG). The short motif at 85 to 87 (NPA) is the NPA 1 element. A run of 3 helical transmembrane segments spans residues 104 to 126 (LLYW…FSTG), 143 to 163 (ALVL…ATAV), and 172 to 192 (TIAP…GGAF). Residues 198–200 (NPA) carry the NPA 2 motif. Residues 218–238 (YWVGPLIGGGLAGVIYELLFI) traverse the membrane as a helical segment.

Belongs to the MIP/aquaporin (TC 1.A.8) family. TIP (TC 1.A.8.10) subfamily. In terms of tissue distribution, expressed in roots, shoots, leaves, tassels, ears and embryos. Expressed in meristems and zones of cell enlargement: tips of primary and lateral roots, leaf primordia, and male and female inflorescence meristems. Highly expressed in the root epidermis and endodermis, parenchyma cells surrounding mature xylem vessels in the root and the stem, phloem companion cells and a ring of cells around the phloem strand in the stem and the leaf sheath, and the basal endosperm transfer cells in developing kernels.

Its subcellular location is the vacuole membrane. Water channel required to facilitate the transport of water across cell membrane. May support the rapid influx of water into vacuoles during cell expansion, permit osmotic equilibration between the cytosol and the vacuolar content and rapid transcellular water flow through living cells. Its function is impaired by Hg(2+). The sequence is that of Aquaporin TIP1-1 (TIP1-1) from Zea mays (Maize).